A 901-amino-acid polypeptide reads, in one-letter code: Protein translocase subunit SecA 1 (901 aa).

ATP-binding positions include Gln87, 105–109, and Asp500; that span reads GEGKT. The interval 847–901 is disordered; the sequence is LNHPESGSWGGEGEGPSSEGAPHLPFKRDGEKVGRNQACPCGSGKKYKQCCGKLS. Zn(2+)-binding residues include Cys885, Cys887, Cys896, and Cys897.

Belongs to the SecA family. In terms of assembly, monomer and homodimer. Part of the essential Sec protein translocation apparatus which comprises SecA, SecYEG and auxiliary proteins SecDF-YajC and YidC. The cofactor is Zn(2+).

Its subcellular location is the cell inner membrane. The protein resides in the cytoplasm. The catalysed reaction is ATP + H2O + cellular proteinSide 1 = ADP + phosphate + cellular proteinSide 2.. Part of the Sec protein translocase complex. Interacts with the SecYEG preprotein conducting channel. Has a central role in coupling the hydrolysis of ATP to the transfer of proteins into and across the cell membrane, serving both as a receptor for the preprotein-SecB complex and as an ATP-driven molecular motor driving the stepwise translocation of polypeptide chains across the membrane. In Magnetococcus marinus (strain ATCC BAA-1437 / JCM 17883 / MC-1), this protein is Protein translocase subunit SecA 1.